Here is a 293-residue protein sequence, read N- to C-terminus: Sec-independent protein translocase protein TatC (293 aa).

The next 6 helical transmembrane spans lie at alanine 35–isoleucine 55, leucine 87–alanine 107, leucine 123–phenylalanine 143, isoleucine 173–isoleucine 193, isoleucine 204–proline 224, and isoleucine 228–isoleucine 248.

This sequence belongs to the TatC family. In terms of assembly, the Tat system comprises two distinct complexes: a TatABC complex, containing multiple copies of TatA, TatB and TatC subunits, and a separate TatA complex, containing only TatA subunits. Substrates initially bind to the TatABC complex, which probably triggers association of the separate TatA complex to form the active translocon.

The protein resides in the cell membrane. Its function is as follows. Part of the twin-arginine translocation (Tat) system that transports large folded proteins containing a characteristic twin-arginine motif in their signal peptide across membranes. Together with TatB, TatC is part of a receptor directly interacting with Tat signal peptides. This is Sec-independent protein translocase protein TatC from Rothia mucilaginosa (strain DY-18) (Stomatococcus mucilaginosus).